A 137-amino-acid chain; its full sequence is Universal stress protein HP_0031 (137 aa).

The protein belongs to the universal stress protein A family.

The chain is Universal stress protein HP_0031 from Helicobacter pylori (strain ATCC 700392 / 26695) (Campylobacter pylori).